The chain runs to 339 residues: D-erythrose-4-phosphate dehydrogenase (339 aa).

NAD(+) contacts are provided by residues 12–13 (RI) and Arg-81. Substrate contacts are provided by residues 154 to 156 (SCT), Arg-200, 213 to 214 (TK), and Arg-236. Cys-155 functions as the Nucleophile in the catalytic mechanism. Asn-318 lines the NAD(+) pocket.

This sequence belongs to the glyceraldehyde-3-phosphate dehydrogenase family. Epd subfamily. In terms of assembly, homotetramer.

It is found in the cytoplasm. It catalyses the reaction D-erythrose 4-phosphate + NAD(+) + H2O = 4-phospho-D-erythronate + NADH + 2 H(+). It participates in cofactor biosynthesis; pyridoxine 5'-phosphate biosynthesis; pyridoxine 5'-phosphate from D-erythrose 4-phosphate: step 1/5. Its function is as follows. Catalyzes the NAD-dependent conversion of D-erythrose 4-phosphate to 4-phosphoerythronate. This chain is D-erythrose-4-phosphate dehydrogenase, found in Shigella dysenteriae serotype 1 (strain Sd197).